The primary structure comprises 462 residues: Neuronal acetylcholine receptor subunit non-alpha-2 (462 aa).

The first 30 residues, 1–30 (MTLAVIGLFTLFTSIIAITPAREFVSLAER), serve as a signal peptide directing secretion. The Extracellular segment spans residues 31–234 (EDALLRELFQ…ITYSFILKRL (204 aa)). N-linked (GlcNAc...) asparagine glycosylation is found at Asn-53 and Asn-168. Cys-155 and Cys-169 form a disulfide bridge. 3 helical membrane-spanning segments follow: residues 235–259 (PLFY…VFYL), 267–284 (VSLS…LLVI), and 301–322 (YLLF…VINV). The Cytoplasmic portion of the chain corresponds to 323 to 428 (HHRSSATYHP…WKFVAQVLDR (106 aa)). The span at 362–372 (ELEPHSPDLKP) shows a compositional bias: basic and acidic residues. Residues 362-384 (ELEPHSPDLKPRNKKGPPGPEGE) form a disordered region. A helical membrane pass occupies residues 429 to 446 (IFLWTFLTVSVLGTILIF).

It belongs to the ligand-gated ion channel (TC 1.A.9) family. Acetylcholine receptor (TC 1.A.9.1) subfamily. In terms of assembly, neuronal AChR seems to be composed of two different type of subunits: alpha and beta.

It localises to the postsynaptic cell membrane. The protein resides in the cell membrane. In terms of biological role, after binding acetylcholine, the AChR responds by an extensive change in conformation that affects all subunits and leads to opening of an ion-conducting channel across the plasma membrane. The chain is Neuronal acetylcholine receptor subunit non-alpha-2 from Carassius auratus (Goldfish).